The primary structure comprises 285 residues: MLLATFKLCAGSSYRHVRNMKGLRHQAALAIGQELNWRAPGGPTQSGWINQVRRQSSLLGSQLEDTLYSDQELAYIQQGEEAMQKALGILRNQEGWKEENQQANGDKVLSKVVPDVGKVFRLEVEVDQPMERLYEELVERMEAMGEWNPNVKEIKVLQKIGKDTVITHELAAESAGNLVGPRDFVSVRCAKRRGSTCVLAGMATQFEEMPEQKGVIRAEHGPTCMVLHPLAGSPSKTKLTWLLSIDLKGWLPKTIINQVLSQTQVDFANHLRKRLESSPAPEARC.

Residues 1-63 constitute a mitochondrion transit peptide; sequence MLLATFKLCA…RQSSLLGSQL (63 aa). Phosphoserine; by PKA is present on residues Ser-57 and Ser-195. An START domain is found at 67-280; that stretch reads LYSDQELAYI…LRKRLESSPA (214 aa).

May interact with TSPO.

The protein localises to the mitochondrion. The enzyme catalyses cholesterol(in) = cholesterol(out). Its pathway is steroid metabolism; cholesterol metabolism. In terms of biological role, plays a key role in steroid hormone synthesis by enhancing the metabolism of cholesterol into pregnenolone. Mediates the transfer of cholesterol from the outer mitochondrial membrane to the inner mitochondrial membrane where it is cleaved to pregnenolone. This is Steroidogenic acute regulatory protein, mitochondrial (STAR) from Equus caballus (Horse).